The primary structure comprises 418 residues: Glutamyl-tRNA reductase (418 aa).

Substrate is bound by residues 49–52, S109, 114–116, and Q120; these read TCNR and EPQ. The Nucleophile role is filled by C50. 189-194 is an NADP(+) binding site; sequence GAGETI.

This sequence belongs to the glutamyl-tRNA reductase family. Homodimer.

The enzyme catalyses (S)-4-amino-5-oxopentanoate + tRNA(Glu) + NADP(+) = L-glutamyl-tRNA(Glu) + NADPH + H(+). It participates in porphyrin-containing compound metabolism; protoporphyrin-IX biosynthesis; 5-aminolevulinate from L-glutamyl-tRNA(Glu): step 1/2. Its function is as follows. Catalyzes the NADPH-dependent reduction of glutamyl-tRNA(Glu) to glutamate 1-semialdehyde (GSA). In Cronobacter sakazakii (strain ATCC BAA-894) (Enterobacter sakazakii), this protein is Glutamyl-tRNA reductase.